A 469-amino-acid chain; its full sequence is Probable cobyric acid synthase (469 aa).

One can recognise a GATase cobBQ-type domain in the interval 241-427; that stretch reads SGSIGIVRYP…VHGILENNEF (187 aa). Residue Cys319 is the Nucleophile of the active site. His419 is a catalytic residue.

The protein belongs to the CobB/CobQ family. CobQ subfamily.

It functions in the pathway cofactor biosynthesis; adenosylcobalamin biosynthesis. In terms of biological role, catalyzes amidations at positions B, D, E, and G on adenosylcobyrinic A,C-diamide. NH(2) groups are provided by glutamine, and one molecule of ATP is hydrogenolyzed for each amidation. This is Probable cobyric acid synthase from Picrophilus torridus (strain ATCC 700027 / DSM 9790 / JCM 10055 / NBRC 100828 / KAW 2/3).